Reading from the N-terminus, the 274-residue chain is NADH-ubiquinone oxidoreductase chain 2 (274 aa).

Helical transmembrane passes span 28-48, 54-74, 79-99, 107-127, 128-148, 171-191, 206-226, and 254-274; these read MIIM…FWFP, LTWM…LMLI, IKYL…IGGL, LMAF…MISE, SIWL…TFMF, FTLF…GFLP, FLLL…LRIC, and LIMT…YFMF.

Belongs to the complex I subunit 2 family.

It localises to the mitochondrion inner membrane. It catalyses the reaction a ubiquinone + NADH + 5 H(+)(in) = a ubiquinol + NAD(+) + 4 H(+)(out). Its function is as follows. Core subunit of the mitochondrial membrane respiratory chain NADH dehydrogenase (Complex I) that is believed to belong to the minimal assembly required for catalysis. Complex I functions in the transfer of electrons from NADH to the respiratory chain. The immediate electron acceptor for the enzyme is believed to be ubiquinone. The chain is NADH-ubiquinone oxidoreductase chain 2 (mt:ND2) from Drosophila mauritiana (Fruit fly).